We begin with the raw amino-acid sequence, 322 residues long: DNA primase small subunit PriS (322 aa).

Catalysis depends on residues D100, D102, and D228.

Belongs to the eukaryotic-type primase small subunit family. As to quaternary structure, heterodimer of a small subunit (PriS) and a large subunit (PriL). It depends on Mg(2+) as a cofactor. The cofactor is Mn(2+).

Functionally, catalytic subunit of DNA primase, an RNA polymerase that catalyzes the synthesis of short RNA molecules used as primers for DNA polymerase during DNA replication. The small subunit contains the primase catalytic core and has DNA synthesis activity on its own. Binding to the large subunit stabilizes and modulates the activity, increasing the rate of DNA synthesis while decreasing the length of the DNA fragments, and conferring RNA synthesis capability. The DNA polymerase activity may enable DNA primase to also catalyze primer extension after primer synthesis. May also play a role in DNA repair. The sequence is that of DNA primase small subunit PriS from Sulfolobus acidocaldarius (strain ATCC 33909 / DSM 639 / JCM 8929 / NBRC 15157 / NCIMB 11770).